A 165-amino-acid polypeptide reads, in one-letter code: ATP synthase subunit b (165 aa).

A helical membrane pass occupies residues 10–30 (LIFWMLLSFGIVFAVLAKYGF).

The protein belongs to the ATPase B chain family. In terms of assembly, F-type ATPases have 2 components, F(1) - the catalytic core - and F(0) - the membrane proton channel. F(1) has five subunits: alpha(3), beta(3), gamma(1), delta(1), epsilon(1). F(0) has three main subunits: a(1), b(2) and c(10-14). The alpha and beta chains form an alternating ring which encloses part of the gamma chain. F(1) is attached to F(0) by a central stalk formed by the gamma and epsilon chains, while a peripheral stalk is formed by the delta and b chains.

Its subcellular location is the cell inner membrane. F(1)F(0) ATP synthase produces ATP from ADP in the presence of a proton or sodium gradient. F-type ATPases consist of two structural domains, F(1) containing the extramembraneous catalytic core and F(0) containing the membrane proton channel, linked together by a central stalk and a peripheral stalk. During catalysis, ATP synthesis in the catalytic domain of F(1) is coupled via a rotary mechanism of the central stalk subunits to proton translocation. In terms of biological role, component of the F(0) channel, it forms part of the peripheral stalk, linking F(1) to F(0). The polypeptide is ATP synthase subunit b (Bacteroides fragilis (strain ATCC 25285 / DSM 2151 / CCUG 4856 / JCM 11019 / LMG 10263 / NCTC 9343 / Onslow / VPI 2553 / EN-2)).